A 742-amino-acid chain; its full sequence is Pyriculol/pyriculariol biosynthesis cluster transcription factor 1 (742 aa).

Positions 23–49 form a DNA-binding region, zn(2)-C6 fungal-type; that stretch reads CVLCQHRKIKCDRSFPCANCQRANVQC. A disordered region spans residues 85–116; it reads GKPDIARLTTKRSSLSQSPPKGEEPLPEWNRH. Residues 105–116 show a composition bias toward basic and acidic residues; sequence KGEEPLPEWNRH.

It localises to the nucleus. Its function is as follows. Transcriptional regulator; part of the gene cluster that mediates the biosynthesis of pyriculol and pyriculariol, two heptaketides that induce lesion formation upon application on rice leaves but are dispensable for pathogenicity. With TRF2, negatively regulates the expression of the gene cluster and the subsequent pyriculol and pyriculariol production. The sequence is that of Pyriculol/pyriculariol biosynthesis cluster transcription factor 1 from Pyricularia oryzae (strain 70-15 / ATCC MYA-4617 / FGSC 8958) (Rice blast fungus).